The chain runs to 388 residues: MKKFFTSESVAIGHPDKIADQIADAILDEVLKQDPLARSAIEVTVSTGDVSIFGELSTKAYVNVRDVATDTIKKIGYIEPKLGFTYDSVNVSNKIVEQSAEISSAVDQAEDDPDQIGAGDQGIIYGYANNETSDYIPLALQLSHKLMKQLKTVREAGDSNSYLRPDGKGEVSVEYGDDNRPKRISAVVLSAQHIEGIELEDLRARISEDIIAPVLPTELVDENTKFFINPSGLWSLGGPQADSGLTGRKIIVDTYGGAAHHGGGAFSGKDATKVDRSGAYYARYVAKNLVAAGLADKLEIQVGYAIGVARPVSIDLDTFGTEKVSIDKIYSIVDQVFDFRPLSIINQLDLRRPIYLQTAAFGHFGRSDLDLPWEKLDQVEKIKALLAN.

Position 14 (His-14) interacts with ATP. Asp-16 lines the Mg(2+) pocket. K(+) is bound at residue Glu-42. 2 residues coordinate L-methionine: Glu-55 and Gln-98. Residues 98–108 are flexible loop; sequence QSAEISSAVDQ. ATP-binding positions include 166 to 168, Asp-242, 248 to 249, Ala-265, and Lys-269; these read DGK and RK. An L-methionine-binding site is contributed by Asp-242. Lys-273 is an L-methionine binding site.

This sequence belongs to the AdoMet synthase family. In terms of assembly, homotetramer; dimer of dimers. Mg(2+) serves as cofactor. It depends on K(+) as a cofactor.

It is found in the cytoplasm. The catalysed reaction is L-methionine + ATP + H2O = S-adenosyl-L-methionine + phosphate + diphosphate. It participates in amino-acid biosynthesis; S-adenosyl-L-methionine biosynthesis; S-adenosyl-L-methionine from L-methionine: step 1/1. Functionally, catalyzes the formation of S-adenosylmethionine (AdoMet) from methionine and ATP. The overall synthetic reaction is composed of two sequential steps, AdoMet formation and the subsequent tripolyphosphate hydrolysis which occurs prior to release of AdoMet from the enzyme. In Oenococcus oeni (strain ATCC BAA-331 / PSU-1), this protein is S-adenosylmethionine synthase.